We begin with the raw amino-acid sequence, 117 residues long: MGSVKSAGLSLLLLSFLLYVADSYPNTDLSNMGCEACTLRKNTVFSRDRPIYQCMGCCFSRAYPTPLKAMKTMTIPKNITSEATCCVAKHVYETEVAGIRVRNHTDCHCSTCYYHKI.

The signal sequence occupies residues 1–23; sequence MGSVKSAGLSLLLLSFLLYVADS. 5 disulfide bridges follow: cysteine 34-cysteine 57, cysteine 37-cysteine 86, cysteine 54-cysteine 107, cysteine 58-cysteine 109, and cysteine 85-cysteine 112. Asparagine 78 and asparagine 103 each carry an N-linked (GlcNAc...) asparagine glycan.

The protein belongs to the glycoprotein hormones subunit alpha family. In terms of assembly, heterodimer. Glycoprotein hormones are heterodimers composed of a common alpha chain described here and a unique beta chain which confers their biological specificity to the different hormones.

The protein localises to the secreted. Shared alpha chain of heterodimeric glycoprotein hormones. These hormones bind specific receptors on target cells that in turn activate downstream signaling pathways. Involved in gametogenesis and steroidogenesis. This is Glycoprotein hormones alpha chain (cga) from Acanthopagrus latus (Yellowfin seabream).